The following is a 340-amino-acid chain: MGKSIPQYLGQLDIRKSVVSLATGAGAIYLLYKAIKAGIKCKPPLCSNSPICIARLAVERERHGRDSGELRRLLNSLECKQDEYAKSMILHSITRCVYLLEAEASACTTDDIVLLGYMLDDKDNSVKTQALNTLKAFSGIRKFRLKIQEHSIKVLELISTIWDTELHIAGLRLLNNLPLPDYVHPQLRRVMPALMEILQSDYILAQVQAVRLLSYLAQKNDLLYDILNCQVHSNFLNLFQPTQSGSLLYEVLVFAERLSEGRNAPHYHVVKWHYNEQSLHESLFGEESRLADRLLALVIHPEEDVQIQACKVIVSLQYPQDLRARPSSCQPSRSYFKNTE.

The interaction with TBC1D15 stretch occupies residues 1–101 (MGKSIPQYLG…SITRCVYLLE (101 aa)). 3 ARM repeats span residues 100 to 139 (LEAE…AFSG), 179 to 218 (LPDY…YLAQ), and 278 to 318 (SLHE…SLQY).

In terms of assembly, interacts with TBC1D15, TBC1D21, GK2 and IMMT. Interacts with VDAC2 and VDAC3 in a TBC1D21-dependent manner. Interacts (via ARM domains) with RBBP4. In terms of tissue distribution, expressed in testis. Highly expressed in the mid-piece of the elongated and late spermatids. Expressed at higher levels in neuroblastoma tissues and cell lines, than those of normal dorsal ganglia (at protein level). Expressed in breast cancer, colon cancer, hepatocellular carcinoma, lung cancer, pancreas cancer, prostate cancer, renal cancer and gastric cancer, but not in their normal counterparts.

The protein resides in the nucleus. It is found in the mitochondrion outer membrane. In terms of biological role, essential for male fertility and sperm mitochondrial sheath formation. Required for proper mitochondrial elongation and coiling along the flagellum during the formation of the mitochondrial sheath. Facilitates the growth and aggressiveness of neuroblastoma cells. Increases the EZH2 activity and H3K27me3 levels in a RBBP4-dependent manner, and facilitates the enrichment of polycomb repressive complex 2 and H3K27me3 on gene promoters, resulting in transcriptional repression of tumor suppressors affecting the proliferation, invasion, and metastasis of tumor cells. This is Armadillo repeat-containing protein 12 (ARMC12) from Homo sapiens (Human).